The primary structure comprises 468 residues: Ribulose bisphosphate carboxylase large chain (468 aa).

At lysine 5 the chain carries N6,N6,N6-trimethyllysine. Substrate-binding residues include asparagine 114 and threonine 164. Catalysis depends on lysine 166, which acts as the Proton acceptor. A substrate-binding site is contributed by lysine 168. Mg(2+) is bound by residues lysine 192, aspartate 194, and glutamate 195. An N6-carboxylysine modification is found at lysine 192. Histidine 285 (proton acceptor) is an active-site residue. Substrate is bound by residues arginine 286, histidine 318, and serine 370.

The protein belongs to the RuBisCO large chain family. Type I subfamily. Heterohexadecamer of 8 large chains and 8 small chains; disulfide-linked. The disulfide link is formed within the large subunit homodimers. It depends on Mg(2+) as a cofactor. Post-translationally, the disulfide bond which can form in the large chain dimeric partners within the hexadecamer appears to be associated with oxidative stress and protein turnover.

It is found in the plastid. It localises to the chloroplast. It carries out the reaction 2 (2R)-3-phosphoglycerate + 2 H(+) = D-ribulose 1,5-bisphosphate + CO2 + H2O. It catalyses the reaction D-ribulose 1,5-bisphosphate + O2 = 2-phosphoglycolate + (2R)-3-phosphoglycerate + 2 H(+). RuBisCO catalyzes two reactions: the carboxylation of D-ribulose 1,5-bisphosphate, the primary event in carbon dioxide fixation, as well as the oxidative fragmentation of the pentose substrate in the photorespiration process. Both reactions occur simultaneously and in competition at the same active site. The chain is Ribulose bisphosphate carboxylase large chain from Anthospermum herbaceum.